The sequence spans 171 residues: Crossover junction endodeoxyribonuclease RuvC (171 aa).

Residues Asp-7, Glu-66, and Asp-138 contribute to the active site. Positions 7, 66, and 138 each coordinate Mg(2+).

Belongs to the RuvC family. Homodimer which binds Holliday junction (HJ) DNA. The HJ becomes 2-fold symmetrical on binding to RuvC with unstacked arms; it has a different conformation from HJ DNA in complex with RuvA. In the full resolvosome a probable DNA-RuvA(4)-RuvB(12)-RuvC(2) complex forms which resolves the HJ. Requires Mg(2+) as cofactor.

Its subcellular location is the cytoplasm. It catalyses the reaction Endonucleolytic cleavage at a junction such as a reciprocal single-stranded crossover between two homologous DNA duplexes (Holliday junction).. In terms of biological role, the RuvA-RuvB-RuvC complex processes Holliday junction (HJ) DNA during genetic recombination and DNA repair. Endonuclease that resolves HJ intermediates. Cleaves cruciform DNA by making single-stranded nicks across the HJ at symmetrical positions within the homologous arms, yielding a 5'-phosphate and a 3'-hydroxyl group; requires a central core of homology in the junction. The consensus cleavage sequence is 5'-(A/T)TT(C/G)-3'. Cleavage occurs on the 3'-side of the TT dinucleotide at the point of strand exchange. HJ branch migration catalyzed by RuvA-RuvB allows RuvC to scan DNA until it finds its consensus sequence, where it cleaves and resolves the cruciform DNA. The polypeptide is Crossover junction endodeoxyribonuclease RuvC (Francisella tularensis subsp. holarctica (strain FTNF002-00 / FTA)).